Here is a 134-residue protein sequence, read N- to C-terminus: Holo-[acyl-carrier-protein] synthase (134 aa).

Mg(2+)-binding residues include D8 and E57.

This sequence belongs to the P-Pant transferase superfamily. AcpS family. Mg(2+) serves as cofactor.

The protein localises to the cytoplasm. It carries out the reaction apo-[ACP] + CoA = holo-[ACP] + adenosine 3',5'-bisphosphate + H(+). Its function is as follows. Transfers the 4'-phosphopantetheine moiety from coenzyme A to a Ser of acyl-carrier-protein. This Rhizobium rhizogenes (strain K84 / ATCC BAA-868) (Agrobacterium radiobacter) protein is Holo-[acyl-carrier-protein] synthase.